The primary structure comprises 231 residues: Lipoprotein-releasing system ATP-binding protein LolD 2 (231 aa).

Residues 6–230 enclose the ABC transporter domain; that stretch reads VEARSLSKSF…DGRLVGQDPA (225 aa). 42 to 49 serves as a coordination point for ATP; that stretch reads GPSGSGKS.

Belongs to the ABC transporter superfamily. Lipoprotein translocase (TC 3.A.1.125) family. As to quaternary structure, the complex is composed of two ATP-binding proteins (LolD) and two transmembrane proteins (LolC and LolE).

The protein resides in the cell inner membrane. Functionally, part of the ABC transporter complex LolCDE involved in the translocation of mature outer membrane-directed lipoproteins, from the inner membrane to the periplasmic chaperone, LolA. Responsible for the formation of the LolA-lipoprotein complex in an ATP-dependent manner. The sequence is that of Lipoprotein-releasing system ATP-binding protein LolD 2 from Rhodospirillum rubrum (strain ATCC 11170 / ATH 1.1.1 / DSM 467 / LMG 4362 / NCIMB 8255 / S1).